Here is a 94-residue protein sequence, read N- to C-terminus: Large ribosomal subunit protein bL25 (94 aa).

This sequence belongs to the bacterial ribosomal protein bL25 family. Part of the 50S ribosomal subunit; part of the 5S rRNA/L5/L18/L25 subcomplex. Contacts the 5S rRNA. Binds to the 5S rRNA independently of L5 and L18.

This is one of the proteins that binds to the 5S RNA in the ribosome where it forms part of the central protuberance. The sequence is that of Large ribosomal subunit protein bL25 from Pectobacterium carotovorum subsp. carotovorum (strain PC1).